A 338-amino-acid polypeptide reads, in one-letter code: Phenylalanine--tRNA ligase alpha subunit (338 aa).

Position 253 (glutamate 253) interacts with Mg(2+).

It belongs to the class-II aminoacyl-tRNA synthetase family. Phe-tRNA synthetase alpha subunit type 1 subfamily. Tetramer of two alpha and two beta subunits. Mg(2+) is required as a cofactor.

It is found in the cytoplasm. The enzyme catalyses tRNA(Phe) + L-phenylalanine + ATP = L-phenylalanyl-tRNA(Phe) + AMP + diphosphate + H(+). This chain is Phenylalanine--tRNA ligase alpha subunit, found in Geobacter metallireducens (strain ATCC 53774 / DSM 7210 / GS-15).